The sequence spans 251 residues: Capsid protein (251 aa).

The Bipartite nuclear localization signal motif lies at 3–20 (KRDAPWRSMAGTSKVSRN). The Nuclear localization signal signature appears at 35–49 (KAAAWVNRPMYRKPR). Residues 63–80 (CEGPCKVQSYEQRHDISH) fold into a zinc finger. The Nuclear export signal signature appears at 96–117 (ITHRVGKRFCVKSVYILGKIWM). The short motif at 195–242 (KRFWKVNNYVVYNHQEAGKYENHTENALLLYMACTHASNPVYATLKIR) is the Bipartite nuclear localization signal element.

Belongs to the geminiviridae capsid protein family. As to quaternary structure, homomultimer. Binds to single-stranded and double-stranded viral DNA. Interacts (via nuclear localization signals) with host importin alpha-1a.

The protein resides in the virion. It is found in the host nucleus. Encapsidates the viral DNA into characteristic twinned ('geminate') particles. Binds the genomic viral ssDNA and shuttles it into and out of the cell nucleus. The CP of bipartite geminiviruses is not required for cell-to-cell or systemic movement. The sequence is that of Capsid protein from Cabbage leaf curl virus (isolate Jamaica) (CaLCuV).